Here is a 242-residue protein sequence, read N- to C-terminus: UPF0073 membrane protein Rv1085c (242 aa).

Transmembrane regions (helical) follow at residues 42–62 (VYSAGTAVLAGASLVAVSWAV), 67–87 (AGLTTLAYTAATITMFTVSAT), 108–128 (SMIFVFIAGSYTPFALLALPA), 133–153 (VVLSIVWGGAIAGILLKMCWP), 159–179 (VGVPLYLLLGWVAVWYTATIL), 186–206 (ALVLLFVGGALYSIGGILYAV), and 222–242 (FHACTAVAAICHYIAMWFVVF).

The protein belongs to the UPF0073 (Hly-III) family.

It localises to the cell membrane. The sequence is that of UPF0073 membrane protein Rv1085c from Mycobacterium tuberculosis (strain ATCC 25618 / H37Rv).